Reading from the N-terminus, the 416-residue chain is Serine hydroxymethyltransferase (416 aa).

(6S)-5,6,7,8-tetrahydrofolate contacts are provided by residues L121 and 125–127; that span reads GHL. K229 bears the N6-(pyridoxal phosphate)lysine mark.

It belongs to the SHMT family. Homodimer. Pyridoxal 5'-phosphate is required as a cofactor.

Its subcellular location is the cytoplasm. It carries out the reaction (6R)-5,10-methylene-5,6,7,8-tetrahydrofolate + glycine + H2O = (6S)-5,6,7,8-tetrahydrofolate + L-serine. The protein operates within one-carbon metabolism; tetrahydrofolate interconversion. It functions in the pathway amino-acid biosynthesis; glycine biosynthesis; glycine from L-serine: step 1/1. Catalyzes the reversible interconversion of serine and glycine with tetrahydrofolate (THF) serving as the one-carbon carrier. This reaction serves as the major source of one-carbon groups required for the biosynthesis of purines, thymidylate, methionine, and other important biomolecules. Also exhibits THF-independent aldolase activity toward beta-hydroxyamino acids, producing glycine and aldehydes, via a retro-aldol mechanism. This chain is Serine hydroxymethyltransferase, found in Dechloromonas aromatica (strain RCB).